Consider the following 482-residue polypeptide: Cardiolipin synthase (482 aa).

The next 2 membrane-spanning stretches (helical) occupy residues 4-24 and 34-54; these read LAYL…VTVF and WAWL…YLIF. 2 consecutive PLD phosphodiesterase domains span residues 217–244 and 395–422; these read LNYR…GDEY and DNGF…DFRS. Active-site residues include histidine 222, lysine 224, aspartate 229, histidine 400, lysine 402, and aspartate 407.

This sequence belongs to the phospholipase D family. Cardiolipin synthase subfamily.

It localises to the cell membrane. It catalyses the reaction 2 a 1,2-diacyl-sn-glycero-3-phospho-(1'-sn-glycerol) = a cardiolipin + glycerol. Catalyzes the reversible phosphatidyl group transfer from one phosphatidylglycerol molecule to another to form cardiolipin (CL) (diphosphatidylglycerol) and glycerol. This chain is Cardiolipin synthase (cls), found in Listeria monocytogenes serotype 4a (strain HCC23).